Consider the following 340-residue polypeptide: NADH-quinone oxidoreductase subunit H (340 aa).

Helical transmembrane passes span 3–23, 69–89, 102–122, 127–147, 154–174, 186–206, 248–268, 274–294, and 312–332; these read LVGMVALMVGVLVSVAYLVYM, WAFFAAPVITFALALAGWAVI, VVVMPYVVADLNLGVLYVLAI, VYGIIMAGWASGSNYAFLGAI, ISYEMSMGLVMLSVSLCAGSL, MPYWMDLLLLPMAGVFFVSML, ILVSAMMVVLFLGGWYPPLNI, IPGFVWFCSKVFLLLFCFIWV, and KVFLPFSFVWVMVISGVLLWV.

Belongs to the complex I subunit 1 family. NDH-1 is composed of 14 different subunits. Subunits NuoA, H, J, K, L, M, N constitute the membrane sector of the complex.

The protein resides in the cell inner membrane. It carries out the reaction a quinone + NADH + 5 H(+)(in) = a quinol + NAD(+) + 4 H(+)(out). In terms of biological role, NDH-1 shuttles electrons from NADH, via FMN and iron-sulfur (Fe-S) centers, to quinones in the respiratory chain. The immediate electron acceptor for the enzyme in this species is believed to be ubiquinone. Couples the redox reaction to proton translocation (for every two electrons transferred, four hydrogen ions are translocated across the cytoplasmic membrane), and thus conserves the redox energy in a proton gradient. This subunit may bind ubiquinone. The protein is NADH-quinone oxidoreductase subunit H of Anaplasma phagocytophilum (strain HZ).